A 737-amino-acid chain; its full sequence is Polyribonucleotide nucleotidyltransferase (737 aa).

Residues Asp489 and Asp495 each contribute to the Mg(2+) site. The region spanning 556 to 615 (PKIDTIKIDVDKIKIVIGKGGETIDKIIAETGVKIDIDEEGNVSIYSSDQDAINRAKEII) is the KH domain. An S1 motif domain is found at 625–693 (DEVYRAKVVR…EKGRVDASMK (69 aa)). The segment at 691–737 (SMKALLPRPPKPERDEKGEKSERPYRPRHHKDHKPKKEITETPKDSE) is disordered. Basic and acidic residues-rich tracts occupy residues 700–715 (PKPERDEKGEKSERPY) and 725–737 (PKKEITETPKDSE).

This sequence belongs to the polyribonucleotide nucleotidyltransferase family. The cofactor is Mg(2+).

It is found in the cytoplasm. It carries out the reaction RNA(n+1) + phosphate = RNA(n) + a ribonucleoside 5'-diphosphate. Its function is as follows. Involved in mRNA degradation. Catalyzes the phosphorolysis of single-stranded polyribonucleotides processively in the 3'- to 5'-direction. In Streptococcus pneumoniae (strain Hungary19A-6), this protein is Polyribonucleotide nucleotidyltransferase.